The sequence spans 285 residues: Tyrosine recombinase XerA (285 aa).

Residues 7-84 enclose the Core-binding (CB) domain; the sequence is IVNSDILEEF…ALKSYFKFEG (78 aa). One can recognise a Tyr recombinase domain in the interval 100–274; that stretch reads SLPKSLTEDE…TTKHLREAIE (175 aa). Active-site residues include Arg-135, Lys-160, His-226, Arg-229, and His-252. The O-(3'-phospho-DNA)-tyrosine intermediate role is filled by Tyr-261.

The protein belongs to the 'phage' integrase family. XerA subfamily.

It is found in the cytoplasm. In terms of biological role, site-specific tyrosine recombinase, which acts by catalyzing the cutting and rejoining of the recombining DNA molecules. This is Tyrosine recombinase XerA from Pyrococcus horikoshii (strain ATCC 700860 / DSM 12428 / JCM 9974 / NBRC 100139 / OT-3).